A 633-amino-acid polypeptide reads, in one-letter code: Rab11 family-interacting protein 4 (633 aa).

EF-hand domains follow at residues 17 to 52 and 50 to 85; these read LFLQ…FAQG and AQGD…MKGC. Residues D30, D32, D34, D63, N65, R69, and D74 each coordinate Ca(2+). Disordered stretches follow at residues 152-182 and 218-257; these read SDLD…LGSL and GEGE…QTPR. The span at 238–254 shows a compositional bias: polar residues; that stretch reads TNALSDLGSSVPSSAGQ. Residues 410 to 613 are a coiled coil; the sequence is AREKGTEIVL…EEINYRLRQY (204 aa). Positions 570–632 constitute an FIP-RBD domain; sequence EAKSLFSTQT…DHNPSILEIK (63 aa).

Homodimer. Forms a complex with Rab11 (rab11a or rab11b) and arf6.

The protein localises to the recycling endosome membrane. The protein resides in the cleavage furrow. Its subcellular location is the midbody. It localises to the cytoplasmic vesicle. Its function is as follows. Acts as a regulator of endocytic traffic by participating in membrane delivery. Required for the abscission step in cytokinesis, possibly by acting as an 'address tag' delivering recycling endosome membranes to the cleavage furrow during late cytokinesis. The protein is Rab11 family-interacting protein 4 (rab11fip4) of Xenopus tropicalis (Western clawed frog).